A 126-amino-acid polypeptide reads, in one-letter code: MPTINQLVRKGRQSETTKSKSPALQDCPQRRGVCTRVYTTTPKKPNSALRKVAKVRLTNGFEVISYIGGEGHNLQEHSVVLIRGGRVKDLPGVRYHMVRGSLDTQGVKDRKQARSKYGAKRAKAGK.

The segment at 1–28 (MPTINQLVRKGRQSETTKSKSPALQDCP) is disordered. Residue Asp89 is modified to 3-methylthioaspartic acid. The disordered stretch occupies residues 103–126 (DTQGVKDRKQARSKYGAKRAKAGK). Positions 113 to 126 (ARSKYGAKRAKAGK) are enriched in basic residues.

Belongs to the universal ribosomal protein uS12 family. Part of the 30S ribosomal subunit. Contacts proteins S8 and S17. May interact with IF1 in the 30S initiation complex.

With S4 and S5 plays an important role in translational accuracy. In terms of biological role, interacts with and stabilizes bases of the 16S rRNA that are involved in tRNA selection in the A site and with the mRNA backbone. Located at the interface of the 30S and 50S subunits, it traverses the body of the 30S subunit contacting proteins on the other side and probably holding the rRNA structure together. The combined cluster of proteins S8, S12 and S17 appears to hold together the shoulder and platform of the 30S subunit. The sequence is that of Small ribosomal subunit protein uS12 from Paraburkholderia phytofirmans (strain DSM 17436 / LMG 22146 / PsJN) (Burkholderia phytofirmans).